The chain runs to 352 residues: UDP-3-O-acylglucosamine N-acyltransferase (352 aa).

The Proton acceptor role is filled by H246.

The protein belongs to the transferase hexapeptide repeat family. LpxD subfamily. Homotrimer.

The enzyme catalyses a UDP-3-O-[(3R)-3-hydroxyacyl]-alpha-D-glucosamine + a (3R)-hydroxyacyl-[ACP] = a UDP-2-N,3-O-bis[(3R)-3-hydroxyacyl]-alpha-D-glucosamine + holo-[ACP] + H(+). Its pathway is bacterial outer membrane biogenesis; LPS lipid A biosynthesis. Its function is as follows. Catalyzes the N-acylation of UDP-3-O-acylglucosamine using 3-hydroxyacyl-ACP as the acyl donor. Is involved in the biosynthesis of lipid A, a phosphorylated glycolipid that anchors the lipopolysaccharide to the outer membrane of the cell. This chain is UDP-3-O-acylglucosamine N-acyltransferase, found in Chlorobium luteolum (strain DSM 273 / BCRC 81028 / 2530) (Pelodictyon luteolum).